The following is a 348-amino-acid chain: L-asparaginase 2 (348 aa).

The signal sequence occupies residues 1–22 (MEFFKKTALAALVMGFSGAALA). The Asparaginase/glutaminase domain occupies 24–348 (PNITILATGG…QQIQQIFNQY (325 aa)). The active-site O-isoaspartyl threonine intermediate is Thr34. Residues 80–81 (SQ) and 111–112 (TD) contribute to the substrate site. A disulfide bond links Cys99 and Cys127.

This sequence belongs to the asparaginase 1 family. As to quaternary structure, homotetramer.

The protein resides in the periplasm. The catalysed reaction is L-asparagine + H2O = L-aspartate + NH4(+). The protein is L-asparaginase 2 (ansB) of Escherichia coli (strain K12).